The sequence spans 169 residues: Nucleoside diphosphate kinase 3 (169 aa).

ADP-binding residues include Lys-29, Arg-105, Thr-111, Arg-122, Val-129, and Asn-132. The active-site Pros-phosphohistidine intermediate is the His-135.

The protein belongs to the NDK family. In terms of assembly, homohexamer. Interacts (via its N-terminal region) with KAT5; this interaction enables recruitment of NME3 at DNA damage sites where it plays a role in the repair of DNA. Found in association with several ciliary nephronophthisis proteins, including NEK8, CEP164, ANKS6. Mg(2+) is required as a cofactor.

The protein localises to the mitochondrion outer membrane. It localises to the cytoplasm. Its subcellular location is the cytoskeleton. The protein resides in the cilium basal body. The catalysed reaction is a 2'-deoxyribonucleoside 5'-diphosphate + ATP = a 2'-deoxyribonucleoside 5'-triphosphate + ADP. It carries out the reaction a ribonucleoside 5'-diphosphate + ATP = a ribonucleoside 5'-triphosphate + ADP. In terms of biological role, catalyzes the phosphorylation of ribonucleosides and deoxyribonucleoside diphosphates, other than ATP, into the corresponding triphosphates with ATP as the major phosphate donor. The ATP gamma phosphate is transferred to the nucleoside diphosphate beta phosphate via a ping-pong mechanism, using a phosphorylated active-site intermediate. Through the catalyzed exchange of gamma-phosphate between di- and triphosphonucleosides participates in regulation of intracellular nucleotide homeostasis. Inhibits granulocyte differentiation. May be required for ciliary function during renal development. Independently of its kinase activity, facilitates mitochondrial tethering prior to membrane fusion through its direct membrane-binding and hexamerization. Implicated in repair of both single- and double-stranded breaks in DNA through its association with the ribonucleotide reductase complex (RNR complex) via its interaction with the histone acetyltransferase KAT5, this interaction enables recruitment of NME3 at DNA damage sites where it plays a role in the repair of DNA, independently of its kinase activity. This is Nucleoside diphosphate kinase 3 from Homo sapiens (Human).